We begin with the raw amino-acid sequence, 213 residues long: MRIVLLTGFEPFDQDPVNPSWEAVRQLEGVQLADDVQIIARRLPCAFATAGARLAQLIDELHPEMVIATGLGPGRSDISIERVAINVNDARIPDNLGEQPIDTAVAPDGPAAYFTTLPIKAMVRAVRGAGIAASVSQTAGTFVCNQVFYLLQHALAATAVRSGFIHVPYLPEQVTGSQRPSMALETMVAGLHAAVLAAWQTPVDAKEAGGQVS.

Residues glutamate 81, cysteine 144, and histidine 166 contribute to the active site.

The protein belongs to the peptidase C15 family. Homotetramer.

The protein localises to the cytoplasm. The catalysed reaction is Release of an N-terminal pyroglutamyl group from a polypeptide, the second amino acid generally not being Pro.. Its function is as follows. Removes 5-oxoproline from various penultimate amino acid residues except L-proline. The sequence is that of Pyrrolidone-carboxylate peptidase from Pseudomonas fluorescens (strain SBW25).